We begin with the raw amino-acid sequence, 233 residues long: Small ribosomal subunit protein uS3 (233 aa).

The KH type-2 domain occupies 39–107 (VRQFLNKELE…PAQINIAEVR (69 aa)).

The protein belongs to the universal ribosomal protein uS3 family. In terms of assembly, part of the 30S ribosomal subunit. Forms a tight complex with proteins S10 and S14.

Its function is as follows. Binds the lower part of the 30S subunit head. Binds mRNA in the 70S ribosome, positioning it for translation. This is Small ribosomal subunit protein uS3 from Edwardsiella ictaluri (strain 93-146).